Consider the following 365-residue polypeptide: UDP-N-acetylglucosamine--N-acetylmuramyl-(pentapeptide) pyrophosphoryl-undecaprenol N-acetylglucosamine transferase (365 aa).

Residues 19–21 (TGG), N131, R170, S201, I255, 274–279 (ALTVTE), and Q300 each bind UDP-N-acetyl-alpha-D-glucosamine.

Belongs to the glycosyltransferase 28 family. MurG subfamily.

It localises to the cell inner membrane. The catalysed reaction is di-trans,octa-cis-undecaprenyl diphospho-N-acetyl-alpha-D-muramoyl-L-alanyl-D-glutamyl-meso-2,6-diaminopimeloyl-D-alanyl-D-alanine + UDP-N-acetyl-alpha-D-glucosamine = di-trans,octa-cis-undecaprenyl diphospho-[N-acetyl-alpha-D-glucosaminyl-(1-&gt;4)]-N-acetyl-alpha-D-muramoyl-L-alanyl-D-glutamyl-meso-2,6-diaminopimeloyl-D-alanyl-D-alanine + UDP + H(+). It functions in the pathway cell wall biogenesis; peptidoglycan biosynthesis. In terms of biological role, cell wall formation. Catalyzes the transfer of a GlcNAc subunit on undecaprenyl-pyrophosphoryl-MurNAc-pentapeptide (lipid intermediate I) to form undecaprenyl-pyrophosphoryl-MurNAc-(pentapeptide)GlcNAc (lipid intermediate II). The polypeptide is UDP-N-acetylglucosamine--N-acetylmuramyl-(pentapeptide) pyrophosphoryl-undecaprenol N-acetylglucosamine transferase (Acinetobacter baumannii (strain ACICU)).